Reading from the N-terminus, the 296-residue chain is tRNA pseudouridine synthase B (296 aa).

The active-site Nucleophile is aspartate 38.

It belongs to the pseudouridine synthase TruB family. Type 1 subfamily.

It carries out the reaction uridine(55) in tRNA = pseudouridine(55) in tRNA. In terms of biological role, responsible for synthesis of pseudouridine from uracil-55 in the psi GC loop of transfer RNAs. The sequence is that of tRNA pseudouridine synthase B from Synechocystis sp. (strain ATCC 27184 / PCC 6803 / Kazusa).